Reading from the N-terminus, the 1205-residue chain is Plasma membrane calcium-transporting ATPase 4 (1205 aa).

Residues 1–100 lie on the Cytoplasmic side of the membrane; sequence MTNPPGQSVS…KTFLELVWEA (100 aa). The chain crosses the membrane as a helical span at residues 101-121; sequence LQDVTLIILEIAAIISLVLSF. The Extracellular segment spans residues 122–147; sequence YRPPGGDNEICGHIASSPEEEEEGET. Residues 148–168 traverse the membrane as a helical segment; sequence GWIEGAAILASVIIVVLVTAF. Residues 169-369 are Cytoplasmic-facing; sequence NDWSKEKQFR…LAVQIGKAGL (201 aa). Residues 294 to 318 are disordered; that stretch reads DDDDKKKKGKKQGAPENRNKAKTQD. Phosphoserine occurs at positions 329 and 335. A helical transmembrane segment spans residues 370-390; sequence IMSVLTVVILILYFVVDNFVI. Residues 391–409 lie on the Extracellular side of the membrane; sequence QRREWLPECTPVYIQYFVK. The helical transmembrane segment at 410–430 threads the bilayer; it reads FFIIGVTVLVVAVPEGLPLAV. The Cytoplasmic segment spans residues 431–844; sequence TISLAYSVKK…RNVYDSISKF (414 aa). Catalysis depends on Asp-466, which acts as the 4-aspartylphosphate intermediate. 2 residues coordinate Mg(2+): Asp-786 and Asp-790. A helical transmembrane segment spans residues 845 to 865; the sequence is LQFQLTVNVVAVIVAFTGACI. Over 866–872 the chain is Extracellular; the sequence is TQDSPLK. The helical transmembrane segment at 873-893 threads the bilayer; that stretch reads AVQMLWVNLIMDTFASLALAT. The Cytoplasmic segment spans residues 894–919; sequence EPPTESLLRRRPYGRNKPLISRTMMK. The chain crosses the membrane as a helical span at residues 920 to 942; it reads NILGHAVYQLLIVFLLVFAGDTL. Residues 943–956 lie on the Extracellular side of the membrane; the sequence is FDIDSGRKAPLNSP. A helical membrane pass occupies residues 957 to 979; it reads PSQHYTIVFNTFVLMQLFNEINA. At 980–995 the chain is on the cytoplasmic side; sequence RKIHGEKNVFAGVYRN. A helical transmembrane segment spans residues 996 to 1016; the sequence is IIFCTVVLGTFFCQIMIVELG. At 1017-1029 the chain is on the extracellular side; it reads GKPFSCTSLTMEQ. Residues 1030 to 1050 form a helical membrane-spanning segment; that stretch reads WMWCLFIGIGELLWGQVISAI. Residues 1051 to 1205 lie on the Cytoplasmic side of the membrane; the sequence is PTKSLKFLKE…SPLPSLETPV (155 aa). Phosphoserine occurs at positions 1065 and 1071. Arg-1072 is modified (omega-N-methylarginine). The segment at 1087 to 1104 is calmodulin-binding subdomain A; the sequence is LRRGQILWVRGLNRIQTQ. Residue Thr-1103 is modified to Phosphothreonine; by PKC. Residues 1105 to 1114 are calmodulin-binding subdomain B; that stretch reads IRVVKLFHNN. Phosphoserine is present on Ser-1145.

Belongs to the cation transport ATPase (P-type) (TC 3.A.3) family. Type IIB subfamily. In terms of assembly, interacts with PDZD11. Interacts with SLC35G1 and STIM1. Interacts with calmodulin. Specifically expressed by sperm in testis (at protein level).

The protein localises to the membrane. Its subcellular location is the cell projection. It localises to the cilium. The protein resides in the flagellum membrane. It catalyses the reaction Ca(2+)(in) + ATP + H2O = Ca(2+)(out) + ADP + phosphate + H(+). With respect to regulation, activated by calcium/calmodulin. Calcium/calmodulin-regulated and magnesium-dependent enzyme that catalyzes the hydrolysis of ATP coupled with the transport of calcium out of the cell. By regulating sperm cell calcium homeostasis, may play a role in sperm motility. The sequence is that of Plasma membrane calcium-transporting ATPase 4 from Mus musculus (Mouse).